The chain runs to 553 residues: Arginine--tRNA ligase (553 aa).

Residues 130–140 (ANPTGPVHLGG) carry the 'HIGH' region motif.

This sequence belongs to the class-I aminoacyl-tRNA synthetase family. As to quaternary structure, monomer.

The protein resides in the cytoplasm. The enzyme catalyses tRNA(Arg) + L-arginine + ATP = L-arginyl-tRNA(Arg) + AMP + diphosphate. This chain is Arginine--tRNA ligase, found in Saccharopolyspora erythraea (strain ATCC 11635 / DSM 40517 / JCM 4748 / NBRC 13426 / NCIMB 8594 / NRRL 2338).